The following is a 406-amino-acid chain: Cysteine desulfurase (406 aa).

Residue Lys-226 is modified to N6-(pyridoxal phosphate)lysine. The active-site Cysteine persulfide intermediate is the Cys-364.

This sequence belongs to the class-V pyridoxal-phosphate-dependent aminotransferase family. Csd subfamily. In terms of assembly, homodimer. Interacts with SufE and the SufBCD complex composed of SufB, SufC and SufD. The interaction with SufE is required to mediate the direct transfer of the sulfur atom from the S-sulfanylcysteine. Pyridoxal 5'-phosphate is required as a cofactor.

Its subcellular location is the cytoplasm. The catalysed reaction is (sulfur carrier)-H + L-cysteine = (sulfur carrier)-SH + L-alanine. It catalyses the reaction L-selenocysteine + AH2 = hydrogenselenide + L-alanine + A + H(+). The protein operates within cofactor biosynthesis; iron-sulfur cluster biosynthesis. Its function is as follows. Cysteine desulfurases mobilize the sulfur from L-cysteine to yield L-alanine, an essential step in sulfur metabolism for biosynthesis of a variety of sulfur-containing biomolecules. Component of the suf operon, which is activated and required under specific conditions such as oxidative stress and iron limitation. Acts as a potent selenocysteine lyase in vitro, that mobilizes selenium from L-selenocysteine. Selenocysteine lyase activity is however unsure in vivo. This chain is Cysteine desulfurase, found in Salmonella choleraesuis (strain SC-B67).